We begin with the raw amino-acid sequence, 49 residues long: Splenin (49 aa).

An LEM-like domain is found at 4–47 (LEDPSVLTKEKLKSELVANNVTLPAGEQRKEVYVELYLQHLTAL). The tract at residues 32–36 (RKEVY) is essential for biological activity.

It belongs to the thymopoietin family.

Hormone of the spleen with pleiotropic actions on prothymocytes, mature T-cells, the nicotinic acetylcholine receptor, and pituitary corticotrophs. The sequence is that of Splenin (SP) from Bos taurus (Bovine).